Reading from the N-terminus, the 404-residue chain is Probable tRNA sulfurtransferase (404 aa).

Positions 61–166 (EAVSERLKDV…SGYSYIMCDE (106 aa)) constitute a THUMP domain. ATP-binding positions include 184-185 (LL), 209-210 (HF), Arg266, Gly288, and Gln297.

This sequence belongs to the ThiI family.

The protein resides in the cytoplasm. The enzyme catalyses [ThiI sulfur-carrier protein]-S-sulfanyl-L-cysteine + a uridine in tRNA + 2 reduced [2Fe-2S]-[ferredoxin] + ATP + H(+) = [ThiI sulfur-carrier protein]-L-cysteine + a 4-thiouridine in tRNA + 2 oxidized [2Fe-2S]-[ferredoxin] + AMP + diphosphate. It carries out the reaction [ThiS sulfur-carrier protein]-C-terminal Gly-Gly-AMP + S-sulfanyl-L-cysteinyl-[cysteine desulfurase] + AH2 = [ThiS sulfur-carrier protein]-C-terminal-Gly-aminoethanethioate + L-cysteinyl-[cysteine desulfurase] + A + AMP + 2 H(+). The protein operates within cofactor biosynthesis; thiamine diphosphate biosynthesis. Catalyzes the ATP-dependent transfer of a sulfur to tRNA to produce 4-thiouridine in position 8 of tRNAs, which functions as a near-UV photosensor. Also catalyzes the transfer of sulfur to the sulfur carrier protein ThiS, forming ThiS-thiocarboxylate. This is a step in the synthesis of thiazole, in the thiamine biosynthesis pathway. The sulfur is donated as persulfide by IscS. The chain is Probable tRNA sulfurtransferase from Bacillus cereus (strain B4264).